We begin with the raw amino-acid sequence, 116 residues long: Class I hydrophobin 1 (116 aa).

An N-terminal signal peptide occupies residues 1–19; that stretch reads MLFKQAILVATTLTDLAVA. 4 cysteine pairs are disulfide-bonded: Cys35/Cys95, Cys42/Cys89, Cys43/Cys76, and Cys96/Cys109. Asn44 and Asn100 each carry an N-linked (GlcNAc...) asparagine glycan.

It belongs to the fungal hydrophobin family. Self-assembles to form functional amyloid fibrils called rodlets. Self-assembly into fibrillar rodlets occurs spontaneously at hydrophobic:hydrophilic interfaces and the rodlets further associate laterally to form amphipathic monolayers.

Its subcellular location is the secreted. It is found in the cell wall. In terms of biological role, aerial growth, conidiation, and dispersal of filamentous fungi in the environment rely upon a capability of their secreting small amphipathic proteins called hydrophobins (HPBs) with low sequence identity. Class I can self-assemble into an outermost layer of rodlet bundles on aerial cell surfaces, conferring cellular hydrophobicity that supports fungal growth, development and dispersal; whereas Class II form highly ordered films at water-air interfaces through intermolecular interactions but contribute nothing to the rodlet structure. The polypeptide is Class I hydrophobin 1 (Pleurotus ostreatus (Oyster mushroom)).